The chain runs to 248 residues: Small ribosomal subunit protein uS2 (248 aa).

Belongs to the universal ribosomal protein uS2 family.

The protein is Small ribosomal subunit protein uS2 of Leptothrix cholodnii (strain ATCC 51168 / LMG 8142 / SP-6) (Leptothrix discophora (strain SP-6)).